The following is a 217-amino-acid chain: Lipoprotein CseA (217 aa).

Positions 1–34 (MRGLGTESLRARGALKAAIAAVAGLAVLGLSVSA) are cleaved as a signal peptide. Cysteine 35 carries N-palmitoyl cysteine lipidation. Cysteine 35 carries S-diacylglycerol cysteine lipidation. 2 disordered regions span residues 39 to 66 (GTGARDEGPAGSDSVAAGAATPTVSPSK) and 192 to 217 (FSEESRTHTEYSNAVGGTDSATPAPN).

It is found in the cell membrane. Functionally, may be involved in the stabilization of the cell envelope or may interact with the sensor protein CseC to modulate its activity, in response to cell envelope stress. The polypeptide is Lipoprotein CseA (cseA) (Streptomyces avermitilis (strain ATCC 31267 / DSM 46492 / JCM 5070 / NBRC 14893 / NCIMB 12804 / NRRL 8165 / MA-4680)).